Here is a 244-residue protein sequence, read N- to C-terminus: Probable 2-phosphosulfolactate phosphatase (244 aa).

This sequence belongs to the ComB family. Mg(2+) is required as a cofactor.

It carries out the reaction (2R)-O-phospho-3-sulfolactate + H2O = (2R)-3-sulfolactate + phosphate. This Cyanothece sp. (strain PCC 7425 / ATCC 29141) protein is Probable 2-phosphosulfolactate phosphatase.